We begin with the raw amino-acid sequence, 344 residues long: Anthranilate phosphoribosyltransferase (344 aa).

Residues Gly-84, 87 to 88 (GD), Thr-92, 94 to 97 (NIST), 112 to 120 (KHGNRSVSS), and Ser-124 each bind 5-phospho-alpha-D-ribose 1-diphosphate. Gly-84 contributes to the anthranilate binding site. Residue Ser-96 participates in Mg(2+) binding. Asn-115 lines the anthranilate pocket. Anthranilate is bound at residue Arg-170. Positions 229 and 230 each coordinate Mg(2+).

The protein belongs to the anthranilate phosphoribosyltransferase family. In terms of assembly, homodimer. Requires Mg(2+) as cofactor.

The catalysed reaction is N-(5-phospho-beta-D-ribosyl)anthranilate + diphosphate = 5-phospho-alpha-D-ribose 1-diphosphate + anthranilate. Its pathway is amino-acid biosynthesis; L-tryptophan biosynthesis; L-tryptophan from chorismate: step 2/5. In terms of biological role, catalyzes the transfer of the phosphoribosyl group of 5-phosphorylribose-1-pyrophosphate (PRPP) to anthranilate to yield N-(5'-phosphoribosyl)-anthranilate (PRA). The chain is Anthranilate phosphoribosyltransferase from Xylella fastidiosa (strain M23).